A 556-amino-acid chain; its full sequence is Formate--tetrahydrofolate ligase (556 aa).

An ATP-binding site is contributed by 65 to 72 (TPAGEGKS).

Belongs to the formate--tetrahydrofolate ligase family.

It carries out the reaction (6S)-5,6,7,8-tetrahydrofolate + formate + ATP = (6R)-10-formyltetrahydrofolate + ADP + phosphate. It functions in the pathway one-carbon metabolism; tetrahydrofolate interconversion. The polypeptide is Formate--tetrahydrofolate ligase (Streptococcus pneumoniae serotype 19F (strain G54)).